We begin with the raw amino-acid sequence, 240 residues long: Ion-translocating oxidoreductase complex subunit E (240 aa).

5 helical membrane passes run 41–61 (LGLGLATMLVLACSNAAVSLV), 71–91 (LPAFVMIIAVLTTCIELLMQA), 95–115 (ELYQVLGIFIPLITTNCVILG), 130–150 (SFDGLLMGLGFALVLLVLGGL), and 184–204 (GFLLAILPPGAFIMLGLLIAL).

It belongs to the NqrDE/RnfAE family. The complex is composed of six subunits: RnfA, RnfB, RnfC, RnfD, RnfE and RnfG.

It is found in the cell inner membrane. Part of a membrane-bound complex that couples electron transfer with translocation of ions across the membrane. The protein is Ion-translocating oxidoreductase complex subunit E of Pseudomonas aeruginosa (strain ATCC 15692 / DSM 22644 / CIP 104116 / JCM 14847 / LMG 12228 / 1C / PRS 101 / PAO1).